Here is a 265-residue protein sequence, read N- to C-terminus: Ribosomal RNA small subunit methyltransferase A (265 aa).

S-adenosyl-L-methionine is bound by residues H13, L15, G40, E62, D87, and N106.

Belongs to the class I-like SAM-binding methyltransferase superfamily. rRNA adenine N(6)-methyltransferase family. RsmA subfamily.

It is found in the cytoplasm. It catalyses the reaction adenosine(1518)/adenosine(1519) in 16S rRNA + 4 S-adenosyl-L-methionine = N(6)-dimethyladenosine(1518)/N(6)-dimethyladenosine(1519) in 16S rRNA + 4 S-adenosyl-L-homocysteine + 4 H(+). Specifically dimethylates two adjacent adenosines (A1518 and A1519) in the loop of a conserved hairpin near the 3'-end of 16S rRNA in the 30S particle. May play a critical role in biogenesis of 30S subunits. This is Ribosomal RNA small subunit methyltransferase A from Persephonella marina (strain DSM 14350 / EX-H1).